The primary structure comprises 84 residues: Putative defensin-like protein 38 (84 aa).

The N-terminal stretch at 1–26 (MASSKNGTVLFVSLMILLLISTGVKA) is a signal peptide. 4 cysteine pairs are disulfide-bonded: Cys-28–Cys-84, Cys-41–Cys-65, Cys-50–Cys-76, and Cys-54–Cys-78.

This sequence belongs to the DEFL family.

It localises to the secreted. The chain is Putative defensin-like protein 38 from Arabidopsis thaliana (Mouse-ear cress).